Reading from the N-terminus, the 962-residue chain is Phosphatidylinositol 3,4,5-trisphosphate 3-phosphatase and dual-specificity protein phosphatase daf-18 (962 aa).

The tract at residues 1–37 (MVTPPPDVPSTSTRSMARDLQENPNRQPGEPRVSEPY) is disordered. A Phosphatase tensin-type domain is found at 58-230 (CRTEYQNIDL…YYYHKLRERE (173 aa)). Catalysis depends on Cys169, which acts as the Phosphocysteine intermediate. The region spanning 234–530 (LPLRMQLIGV…GMKLHVVLRC (297 aa)) is the C2 tensin-type domain. Disordered regions lie at residues 382–416 (DTSIGRKNGMRRNETPMRKIDPETGNEFESPWQIV) and 689–731 (IENT…RLPD). Basic and acidic residues predominate over residues 392–403 (RRNETPMRKIDP). The segment covering 692-704 (TGPSTSGSSAPGT) has biased composition (low complexity). Residues 706-720 (KKTEASQSDKVKPAT) show a composition bias toward basic and acidic residues.

The protein belongs to the PTEN phosphatase protein family. As to quaternary structure, interacts (via C-terminus) with vab-1 (via kinase domain); the interaction is independent of vab-1 kinase activity. Interacts with arr-1 and mpz-1; the interaction may inhibit daf-18. Interacts (via C-terminus) with daf-2 (via kinase domain). Phosphorylated by vab-1 on tyrosine residues which may promote daf-18 degradation. In terms of tissue distribution, expressed in embryo, larvae and in adult germline (at protein level). Expressed at equal levels in the 6 vulva precursor cells (VPCs) of L2 larvae and in the descendant cells of the induced VPCs (at protein level). Expressed in the uterus (at protein level). Expressed in the Z2/Z3 germline precursors, oocytes, several amphid neurons and weakly in the nerve cord (at protein level).

The protein localises to the perikaryon. It is found in the cell membrane. It localises to the cell projection. Its subcellular location is the axon. The protein resides in the dendrite. The protein localises to the cytoplasm. It is found in the nucleus. The enzyme catalyses a 1,2-diacyl-sn-glycero-3-phospho-(1D-myo-inositol-3,4,5-trisphosphate) + H2O = a 1,2-diacyl-sn-glycero-3-phospho-(1D-myo-inositol-4,5-bisphosphate) + phosphate. It catalyses the reaction O-phospho-L-seryl-[protein] + H2O = L-seryl-[protein] + phosphate. The catalysed reaction is O-phospho-L-threonyl-[protein] + H2O = L-threonyl-[protein] + phosphate. It carries out the reaction O-phospho-L-tyrosyl-[protein] + H2O = L-tyrosyl-[protein] + phosphate. The enzyme catalyses 1,2-dioctanoyl-sn-glycero-3-phospho-(1D-myo-inositol-3,4,5-trisphosphate) + H2O = 1,2-dioctanoyl-sn-glycero-3-phospho-(1D-myo-inositol-4,5-bisphosphate) + phosphate. It catalyses the reaction 1,2-dihexadecanoyl-sn-glycero-3-phospho-(1D-myo-inositol-3,4,5-trisphosphate) + H2O = 1,2-dihexadecanoyl-sn-glycero-3-phospho-(1D-myo-inositol-4,5-bisphosphate) + phosphate. Functionally, acts as a dual-specificity protein phosphatase, dephosphorylating tyrosine-, serine- and threonine-phosphorylated proteins. Also acts as a lipid phosphatase, removing the phosphate in the D3 position of the inositol ring from phosphatidylinositol 3,4,5-trisphosphate. By dephosphorylating PtdIns(3,4,5)P3 antagonizes PtdIns(3,4,5)P3 production by age-1/PI3K and thus, negatively regulates daf-2-mediated processes including dauer formation, longevity, fat metabolism, chemotaxis towards salt, thermotolerance and axon guidance. Similarly, promotes apoptosis during embryonic development by suppressing the recruitment of the prosurvival kinases akt-1/2 to the plasma membrane. In addition, regulates Z2/Z3 germline precursor cell cycle by maintaining them arrested at the G2 stage and by controlling their growth during L1 diapause. After sperm depletion in larvae and adult hermaphrodites, promotes germline stem cell quiescence and oocyte accumulation. By dephosphorylating ephrin-like receptor vab-1 on tyrosine residues, negatively regulates oocyte maturation downstream of vab-1 and upstream of mpk-1, independently of daf-2. Plays a role in postembryonic muscle arm extensions. Required for neurite outgrowth during AIY interneuron embryonic development. Mainly independently of daf-2, negatively regulates vulva induction probably by inhibiting mpk-1 phosphorylation. Both lipid and protein phosphatase activities are required for the regulation of vulva induction. Plays a role in gonad and germline development following the L1 diapause. This is Phosphatidylinositol 3,4,5-trisphosphate 3-phosphatase and dual-specificity protein phosphatase daf-18 from Caenorhabditis elegans.